The primary structure comprises 42 residues: Beta-defensin 13 (42 aa).

Intrachain disulfides connect Cys-9–Cys-38, Cys-16–Cys-31, and Cys-21–Cys-39.

It belongs to the beta-defensin family. Neutrophilic granules.

It localises to the secreted. Has bactericidal activity. Active against E.coli ML35 and S.aureus 502A. The protein is Beta-defensin 13 (DEFB13) of Bos taurus (Bovine).